We begin with the raw amino-acid sequence, 482 residues long: Falcipain-2b (482 aa).

At 1–35 (MDYHMDYIPNEVISHQGERFVDKYVDRKILKNKKS) the chain is on the cytoplasmic side. Residues 1–241 (MDYHMDYIPN…PLKNSKYLLD (241 aa)) constitute a propeptide, activation peptide. A Bipartite vacuolar targeting signal 1 motif is present at residues 16–25 (QGERFVDKYV). Residues 36–56 (LLVIISLSVLSVVGFILFYFT) form a helical; Signal-anchor for type II membrane protein membrane-spanning segment. Residues 57–482 (PNFRKSDLFK…GTDAFIPLIE (426 aa)) are Lumenal-facing. An N-linked (GlcNAc...) asparagine glycan is attached at Asn-67. Positions 84-105 (KSPNGKKFIVSKIDEALSFYDN) match the Bipartite vacuolar targeting signal 2 motif. An N-linked (GlcNAc...) asparagine glycan is attached at Asn-117. The Nose motif; required for the correct folding of the mature form motif lies at 242–258 (QINYDAVIKKYKGNENF). 4 cysteine pairs are disulfide-bonded: Cys-280/Cys-321, Cys-314/Cys-355, Cys-340/Cys-360, and Cys-409/Cys-470. Cys-283 is an active-site residue. His-415 is an active-site residue. The Arm motif; binds to host hemoglobin and required for the inhibitory interaction between the propeptide and the catalytic domain signature appears at 426-435 (EIVNPLTKKG).

The protein belongs to the peptidase C1 family. Component of the hemozoin formation complex (HFC) composed of falcipains FP2A and/or FP2B, plasmepsins PMII, PMIII/HAP and PMIV, heme detoxifying protein HDP and falcilysin FLN. The HFC complex is involved in hemoglobin degradation and detoxification of heme in the food vacuole during the asexual blood stage.

Its subcellular location is the vacuole. It is found in the membrane. Its function is as follows. Cysteine protease which cleaves native host hemoglobin in the food vacuole during the asexual blood stage. Preferentially cleaves substrates which have a leucine at the P2 position. This Plasmodium falciparum (isolate 3D7) protein is Falcipain-2b.